Here is a 414-residue protein sequence, read N- to C-terminus: Ankyrin repeat domain-containing protein 10 (414 aa).

ANK repeat units follow at residues 18–47 (TLRF…RSDL), 54–83 (YGWT…SVNA), 88–117 (FAQT…NINK), 121–150 (VGET…QIDL), and 154–187 (SGLT…RYYS). The tract at residues 310–332 (GVTSPSRHRIHTSNGTEEPEKAM) is disordered.

In Gallus gallus (Chicken), this protein is Ankyrin repeat domain-containing protein 10 (ANKRD10).